Reading from the N-terminus, the 405-residue chain is Transposase from transposon Tn1545 (405 aa).

The region spanning Gly-79–Ile-163 is the Core-binding (CB) domain. The Tyr recombinase domain maps to Val-186–Lys-392. Residues Arg-225, Lys-264, His-343, Arg-346, and His-369 contribute to the active site. Tyr-379 acts as the O-(3'-phospho-DNA)-tyrosine intermediate in catalysis.

It belongs to the 'phage' integrase family.

The sequence is that of Transposase from transposon Tn1545 (int) from Streptococcus agalactiae serotype V (strain ATCC BAA-611 / 2603 V/R).